Consider the following 214-residue polypeptide: MRVHHPYHEIPVETLNVDFFNLSPLSVARRLIGCAVVRVLAGERLSGRIVETEAYGGLRDPSCYVVRRDERIWSLLSGPPGVLYLHRAYRHWLLNITCDAVGEPACVLIRALEPTGGEERMRQLRRGARDLTNGPARLVEALAIDSAWEASALPRAEFWLEAGEPVPEEQVLNTVRIGLTRGKDLPWRFAVRDSPWVSRSVEAVLSEASLSAGL.

This sequence belongs to the DNA glycosylase MPG family.

This chain is Putative 3-methyladenine DNA glycosylase, found in Gloeobacter violaceus (strain ATCC 29082 / PCC 7421).